We begin with the raw amino-acid sequence, 402 residues long: CCA-adding enzyme (402 aa).

2 residues coordinate ATP: Gly32 and Arg35. Residues Gly32 and Arg35 each contribute to the CTP site. 2 residues coordinate Mg(2+): Asp45 and Asp47. Positions 116, 159, 162, 165, and 168 each coordinate ATP. CTP contacts are provided by Arg116, Asp159, Arg162, Arg165, and Arg168.

It belongs to the tRNA nucleotidyltransferase/poly(A) polymerase family. Bacterial CCA-adding enzyme type 3 subfamily. Homodimer. Mg(2+) is required as a cofactor.

The catalysed reaction is a tRNA precursor + 2 CTP + ATP = a tRNA with a 3' CCA end + 3 diphosphate. It carries out the reaction a tRNA with a 3' CCA end + 2 CTP + ATP = a tRNA with a 3' CCACCA end + 3 diphosphate. Its function is as follows. Catalyzes the addition and repair of the essential 3'-terminal CCA sequence in tRNAs without using a nucleic acid template. Adds these three nucleotides in the order of C, C, and A to the tRNA nucleotide-73, using CTP and ATP as substrates and producing inorganic pyrophosphate. tRNA 3'-terminal CCA addition is required both for tRNA processing and repair. Also involved in tRNA surveillance by mediating tandem CCA addition to generate a CCACCA at the 3' terminus of unstable tRNAs. While stable tRNAs receive only 3'-terminal CCA, unstable tRNAs are marked with CCACCA and rapidly degraded. The protein is CCA-adding enzyme of Streptococcus pyogenes serotype M6 (strain ATCC BAA-946 / MGAS10394).